The sequence spans 394 residues: GDSL esterase/lipase At1g31550 (394 aa).

The signal sequence occupies residues Met1–Ser27. Ser43 serves as the catalytic Nucleophile. N-linked (GlcNAc...) asparagine glycans are attached at residues Asn138, Asn290, and Asn322. Residues Asp345 and His348 contribute to the active site.

The protein belongs to the 'GDSL' lipolytic enzyme family.

It is found in the secreted. This chain is GDSL esterase/lipase At1g31550, found in Arabidopsis thaliana (Mouse-ear cress).